Reading from the N-terminus, the 54-residue chain is Large ribosomal subunit protein bL32 (54 aa).

It belongs to the bacterial ribosomal protein bL32 family.

This Buchnera aphidicola subsp. Baizongia pistaciae (strain Bp) protein is Large ribosomal subunit protein bL32.